Consider the following 906-residue polypeptide: Protein translocase subunit SecA (906 aa).

Residues Gln-86, 104-108 (GEGKT), and Asp-511 contribute to the ATP site. Basic and acidic residues-rich tracts occupy residues 853–865 (HESVIDNNQRHDE) and 877–888 (VRREGPKVKRND). A disordered region spans residues 853–906 (HESVIDNNQRHDEDEQEEAPKVQQVRREGPKVKRNDPCPCGSGKKYKQCHGKVE). Zn(2+) is bound by residues Cys-890, Cys-892, Cys-901, and His-902. Residues 896–906 (KKYKQCHGKVE) are compositionally biased toward basic residues.

It belongs to the SecA family. Monomer and homodimer. Part of the essential Sec protein translocation apparatus which comprises SecA, SecYEG and auxiliary proteins SecDF-YajC and YidC. Zn(2+) serves as cofactor.

The protein resides in the cell inner membrane. The protein localises to the cytoplasm. The enzyme catalyses ATP + H2O + cellular proteinSide 1 = ADP + phosphate + cellular proteinSide 2.. Functionally, part of the Sec protein translocase complex. Interacts with the SecYEG preprotein conducting channel. Has a central role in coupling the hydrolysis of ATP to the transfer of proteins into and across the cell membrane, serving both as a receptor for the preprotein-SecB complex and as an ATP-driven molecular motor driving the stepwise translocation of polypeptide chains across the membrane. The sequence is that of Protein translocase subunit SecA from Francisella tularensis subsp. holarctica (strain OSU18).